A 317-amino-acid chain; its full sequence is uncharacterized protein (317 aa).

The HTH lysR-type domain maps to 1-60; that stretch reads MKHELSSMKAFVILAESSSFNNAAKLLNITQPALTRRIKKMEEDLHVQLFERTTRKVTLT. Residues 20–40 constitute a DNA-binding region (H-T-H motif); sequence FNNAAKLLNITQPALTRRIKK.

This sequence belongs to the LysR transcriptional regulatory family.

This is an uncharacterized protein from Escherichia coli (strain K12).